The following is a 279-amino-acid chain: Putative pyruvate, phosphate dikinase regulatory protein (279 aa).

152–159 lines the ADP pocket; that stretch reads GVSRTSKS.

It belongs to the pyruvate, phosphate/water dikinase regulatory protein family. PDRP subfamily.

The catalysed reaction is N(tele)-phospho-L-histidyl/L-threonyl-[pyruvate, phosphate dikinase] + ADP = N(tele)-phospho-L-histidyl/O-phospho-L-threonyl-[pyruvate, phosphate dikinase] + AMP + H(+). It carries out the reaction N(tele)-phospho-L-histidyl/O-phospho-L-threonyl-[pyruvate, phosphate dikinase] + phosphate + H(+) = N(tele)-phospho-L-histidyl/L-threonyl-[pyruvate, phosphate dikinase] + diphosphate. Its function is as follows. Bifunctional serine/threonine kinase and phosphorylase involved in the regulation of the pyruvate, phosphate dikinase (PPDK) by catalyzing its phosphorylation/dephosphorylation. In Anaplasma marginale (strain Florida), this protein is Putative pyruvate, phosphate dikinase regulatory protein.